A 144-amino-acid chain; its full sequence is UPF0299 membrane protein MS1271 (144 aa).

4 helical membrane passes run I5 to I25, L28 to T48, V57 to V77, and S92 to G112.

This sequence belongs to the UPF0299 family.

It localises to the cell inner membrane. The protein is UPF0299 membrane protein MS1271 of Mannheimia succiniciproducens (strain KCTC 0769BP / MBEL55E).